A 108-amino-acid chain; its full sequence is Urease subunit beta (108 aa).

The protein belongs to the urease beta subunit family. In terms of assembly, heterotrimer of UreA (gamma), UreB (beta) and UreC (alpha) subunits. Three heterotrimers associate to form the active enzyme.

It is found in the cytoplasm. It carries out the reaction urea + 2 H2O + H(+) = hydrogencarbonate + 2 NH4(+). Its pathway is nitrogen metabolism; urea degradation; CO(2) and NH(3) from urea (urease route): step 1/1. The protein is Urease subunit beta of Proteus hauseri.